We begin with the raw amino-acid sequence, 118 residues long: Large ribosomal subunit protein bL19 (118 aa).

The protein belongs to the bacterial ribosomal protein bL19 family.

Its function is as follows. This protein is located at the 30S-50S ribosomal subunit interface and may play a role in the structure and function of the aminoacyl-tRNA binding site. This chain is Large ribosomal subunit protein bL19, found in Ligilactobacillus salivarius (strain UCC118) (Lactobacillus salivarius).